The following is a 338-amino-acid chain: Biotin synthase (338 aa).

In terms of domain architecture, Radical SAM core spans 46-270 (NEVQLSTLLS…VAVARITMPA (225 aa)). Residues Cys61, Cys65, and Cys68 each coordinate [4Fe-4S] cluster. 4 residues coordinate [2Fe-2S] cluster: Cys105, Cys136, Cys196, and Arg274.

It belongs to the radical SAM superfamily. Biotin synthase family. As to quaternary structure, homodimer. The cofactor is [4Fe-4S] cluster. Requires [2Fe-2S] cluster as cofactor.

It catalyses the reaction (4R,5S)-dethiobiotin + (sulfur carrier)-SH + 2 reduced [2Fe-2S]-[ferredoxin] + 2 S-adenosyl-L-methionine = (sulfur carrier)-H + biotin + 2 5'-deoxyadenosine + 2 L-methionine + 2 oxidized [2Fe-2S]-[ferredoxin]. It functions in the pathway cofactor biosynthesis; biotin biosynthesis; biotin from 7,8-diaminononanoate: step 2/2. Catalyzes the conversion of dethiobiotin (DTB) to biotin by the insertion of a sulfur atom into dethiobiotin via a radical-based mechanism. The sequence is that of Biotin synthase from Rhizorhabdus wittichii (strain DSM 6014 / CCUG 31198 / JCM 15750 / NBRC 105917 / EY 4224 / RW1) (Sphingomonas wittichii).